Here is a 161-residue protein sequence, read N- to C-terminus: Allophycocyanin subunit alpha 1 (161 aa).

Position 71 is an N4-methylasparagine (Asn71). Cys81 is a binding site for (2R,3E)-phycocyanobilin.

This sequence belongs to the phycobiliprotein family. As to quaternary structure, heterohexamer of two alpha chains, one alpha-B chain and three beta chains. Post-translationally, contains one covalently linked phycocyanobilin chromophore. The chromophore is added by phycocyanobilin lyase CpcS 1.

It is found in the cellular thylakoid membrane. Light-harvesting photosynthetic bile pigment-protein from the phycobiliprotein complex. Allophycocyanin has a maximum absorption at approximately 650 to 653 nanometers. In Nostoc sp. (strain PCC 7120 / SAG 25.82 / UTEX 2576), this protein is Allophycocyanin subunit alpha 1 (apcA1).